The chain runs to 1120 residues: Transcriptional repressor NF-X1 (1120 aa).

An interaction with PABPC1 and PABC4 region spans residues 9–26 (GTFKFNTDAAEFIPQEKK). The disordered stretch occupies residues 22-295 (PQEKKNSGLN…LNERPAKSTC (274 aa)). S50, S82, and S95 each carry phosphoserine. Over residues 73–106 (YHPSGSKPKSQQTSFQSSPCNKSPKSHGLQNQPW) the composition is skewed to polar residues. The segment covering 111 to 120 (NEKHHIRVKK) has biased composition (basic residues). Residues 124–141 (LAEQTSDTAGLESSTRSE) are compositionally biased toward polar residues. 2 positions are modified to phosphoserine: S129 and S150. 4 stretches are compositionally biased toward basic and acidic residues: residues 142–159 (SGTD…KEVV), 188–202 (LKCE…KPED), 222–254 (SSRK…EGAR), and 282–291 (PKDDLNERPA). S326 carries the phosphoserine modification. The segment at 358–409 (CMVCCELVRVTAPVWSCQSCYHVFHLNCIKKWARSPASQADGQSGWRCPACQ) adopts an RING-type; atypical zinc-finger fold. 8 NF-X1-type zinc fingers span residues 453–471 (CPHS…PCPA), 506–525 (CGQH…PCQI), 567–586 (CGNH…QCPR), 632–655 (CGSL…PCSR), 694–713 (CGRH…KCPL), 721–740 (CGLH…TCWQ), 832–854 (CGMH…PCKQ), and 863–884 (CGHP…ACKA). The region spanning 994-1062 (LKFVSDVEKE…KRNVVVTAIR (69 aa)) is the R3H domain. The interval 1081 to 1109 (QARPPPPIPHHRHQSDKNPGSSNLQKITK) is disordered. Positions 1097–1106 (KNPGSSNLQK) are enriched in polar residues.

This sequence belongs to the NFX1 family. In terms of assembly, isoform 1 interacts with PABPC1 and PABPC4. As to quaternary structure, (Microbial infection) Isoform 1 and isoform 3 interact with human papillomavirus (HPV) type-16 E6 oncoprotein. In terms of processing, isoform 3 is polyubiquitinated in the presence of HPV16 E6 protein; which leads to proteasomal degradation. Isoform 1 is not polyubiquitinated.

It is found in the nucleus. In terms of biological role, binds to the X-box motif of MHC class II genes and represses their expression. May play an important role in regulating the duration of an inflammatory response by limiting the period in which MHC class II molecules are induced by interferon-gamma. Isoform 3 binds to the X-box motif of TERT promoter and represses its expression. Together with PABPC1 or PABPC4, isoform 1 acts as a coactivator for TERT expression. Mediates E2-dependent ubiquitination. The chain is Transcriptional repressor NF-X1 (NFX1) from Homo sapiens (Human).